The primary structure comprises 465 residues: Argininosuccinate lyase (465 aa).

The protein belongs to the lyase 1 family. Argininosuccinate lyase subfamily.

It is found in the cytoplasm. It carries out the reaction 2-(N(omega)-L-arginino)succinate = fumarate + L-arginine. Its pathway is amino-acid biosynthesis; L-arginine biosynthesis; L-arginine from L-ornithine and carbamoyl phosphate: step 3/3. This Clostridium botulinum (strain Eklund 17B / Type B) protein is Argininosuccinate lyase.